The following is a 368-amino-acid chain: MSYKNRLTACFDDILKVSAEMMMQQQLKNVQLDPYMVNGFSAQQQNTLKEKIHMFHGILDDLENMLSKSTYYVDTLANLGKESKRQKELELEKQREQEEEEKKQKLLELERKKKEQEEEEEKKKKQKEEEEKRKKELEEQERKKKEQEEEEKRRRQQEQDGDKQQSMFDGLDFTNADLDTSQPGTSGQNDIKSPTMGAGPQTAGTDKPNTADGPDKTNPPIAAFGLGDSQSGGLYNDLNTMDLSMFSELDGGGFDASGFDTANTSNANATTNSVPNNNNPATNDSNMNNDPTAAINAFDGTAAGNNETLGQGEKLEFDQSNPSAMLGNDINMGDNGEDYLTLNDFNDLNIDWSAAGEGGDLDLNGFNI.

Residues 112–163 (KKKEQEEEEEKKKKQKEEEEKRKKELEEQERKKKEQEEEEKRRRQQEQDGDK) show a composition bias toward basic and acidic residues. 2 disordered regions span residues 112–231 (KKKE…DSQS) and 265–308 (SNAN…NNET). Residues 177–192 (DLDTSQPGTSGQNDIK) are compositionally biased toward polar residues. Positions 265-290 (SNANATTNSVPNNNNPATNDSNMNND) are enriched in low complexity.

The protein belongs to the Mediator complex subunit 2 family. In terms of assembly, component of the Mediator complex.

The protein resides in the nucleus. Its function is as follows. Component of the Mediator complex, a coactivator involved in the regulated transcription of nearly all RNA polymerase II-dependent genes. Mediator functions as a bridge to convey information from gene-specific regulatory proteins to the basal RNA polymerase II transcription machinery. Mediator is recruited to promoters by direct interactions with regulatory proteins and serves as a scaffold for the assembly of a functional preinitiation complex with RNA polymerase II and the general transcription factors. In Candida glabrata (strain ATCC 2001 / BCRC 20586 / JCM 3761 / NBRC 0622 / NRRL Y-65 / CBS 138) (Yeast), this protein is Mediator of RNA polymerase II transcription subunit 2 (MED2).